A 197-amino-acid polypeptide reads, in one-letter code: ATP-dependent Clp protease proteolytic subunit 2 (197 aa).

The active-site Nucleophile is serine 96. Histidine 121 is an active-site residue.

It belongs to the peptidase S14 family. As to quaternary structure, fourteen ClpP subunits assemble into 2 heptameric rings which stack back to back to give a disk-like structure with a central cavity, resembling the structure of eukaryotic proteasomes.

It localises to the cytoplasm. It carries out the reaction Hydrolysis of proteins to small peptides in the presence of ATP and magnesium. alpha-casein is the usual test substrate. In the absence of ATP, only oligopeptides shorter than five residues are hydrolyzed (such as succinyl-Leu-Tyr-|-NHMec, and Leu-Tyr-Leu-|-Tyr-Trp, in which cleavage of the -Tyr-|-Leu- and -Tyr-|-Trp bonds also occurs).. In terms of biological role, cleaves peptides in various proteins in a process that requires ATP hydrolysis. Has a chymotrypsin-like activity. Plays a major role in the degradation of misfolded proteins. The polypeptide is ATP-dependent Clp protease proteolytic subunit 2 (Synechococcus sp. (strain CC9605)).